Reading from the N-terminus, the 314-residue chain is Acetylglutamate kinase (314 aa).

Residues 76 to 77 (GG), arginine 98, and asparagine 199 contribute to the substrate site.

It belongs to the acetylglutamate kinase family. ArgB subfamily.

It localises to the cytoplasm. It carries out the reaction N-acetyl-L-glutamate + ATP = N-acetyl-L-glutamyl 5-phosphate + ADP. Its pathway is amino-acid biosynthesis; L-arginine biosynthesis; N(2)-acetyl-L-ornithine from L-glutamate: step 2/4. Catalyzes the ATP-dependent phosphorylation of N-acetyl-L-glutamate. This chain is Acetylglutamate kinase, found in Bifidobacterium longum (strain DJO10A).